A 135-amino-acid polypeptide reads, in one-letter code: Large ribosomal subunit protein uL18c (135 aa).

This sequence belongs to the universal ribosomal protein uL18 family. In terms of assembly, part of the 50S ribosomal subunit; contacts the 5S rRNA.

The protein localises to the plastid. The protein resides in the chloroplast. Binds 5S rRNA, forms part of the central protuberance of the 50S subunit. The chain is Large ribosomal subunit protein uL18c (rpl18) from Phaeodactylum tricornutum (strain CCAP 1055/1).